Here is a 446-residue protein sequence, read N- to C-terminus: ATP synthase subunit b-delta (446 aa).

Positions 1–168 are ATP synthase subunit b; that stretch reads MSTFIGQLVG…PAAADVQYPL (168 aa). Residues 4-24 form a helical membrane-spanning segment; sequence FIGQLVGFAAIVFLVVRYVVP. The tract at residues 169–446 is ATP synthase subunit delta; it reads MTKMRSSSRV…LAAAEAQLPD (278 aa).

It in the N-terminal section; belongs to the ATPase B chain family. The protein in the C-terminal section; belongs to the ATPase delta chain family. F-type ATPases have 2 components, F(1) - the catalytic core - and F(0) - the membrane proton channel. F(1) has five subunits: alpha(3), beta(3), gamma(1), delta(1), epsilon(1). F(0) has three main subunits: a(1), b(2) and c(10-14). The alpha and beta chains form an alternating ring which encloses part of the gamma chain. F(1) is attached to F(0) by a central stalk formed by the gamma and epsilon chains, while a peripheral stalk is formed by the delta and b chains.

It is found in the cell membrane. Functionally, f(1)F(0) ATP synthase produces ATP from ADP in the presence of a proton or sodium gradient. F-type ATPases consist of two structural domains, F(1) containing the extramembraneous catalytic core and F(0) containing the membrane proton channel, linked together by a central stalk and a peripheral stalk. During catalysis, ATP synthesis in the catalytic domain of F(1) is coupled via a rotary mechanism of the central stalk subunits to proton translocation. Its function is as follows. This fusion protein includes a component of the F(0) channel (subunit b) and of the F(1) subunit (subunit delta). Two copies of subunit b and one of delta together form the peripheral 'stator' stalk which links F(1) to F(0). This Mycobacterium avium (strain 104) protein is ATP synthase subunit b-delta (atpFH).